A 72-amino-acid polypeptide reads, in one-letter code: Potassium channel toxin kappa-KTx 5.1 (72 aa).

Positions 1–23 (MKLLPLLFVILIVCAILPDEASC) are cleaved as a signal peptide. Residues 24–43 (DQSELERKEENFKDESREIV) constitute a propeptide that is removed on maturation. 2 disulfides stabilise this stretch: cysteine 47–cysteine 64 and cysteine 51–cysteine 60. Histidine 70 carries the post-translational modification Histidine amide.

Belongs to the short scorpion toxin superfamily. Potassium channel inhibitor kappa-KTx family. Kappa-KTx 5 subfamily. In terms of tissue distribution, expressed by the venom gland.

Its subcellular location is the secreted. Its function is as follows. Weak blocker of potassium channels Kv1.1/KCNA1 (IC(50)=578.5 nM-9.9 uM) and Kv1.6/KCNA6 (~60% block at 30 uM of toxin). Acts by binding to the pore and occluding it. Has a voltage-dependent mode of action, which can be explained by a high content of basic residues causing repulsions at higher membrane voltages. Shows a weak interaction with muscle-type nicotinic acetylcholine receptors (nAChR), since it inhibits alpha-bungarotoxin binding to muscle-type nAChR from T.californica (IC(50)=1.4 uM). This suggests it probably weakly inhibits muscle nAChR. The mode of binding to potassium channels of this toxin differs from its homologs (including HefuTx1), since it lacks the key aromatic residue of the functional dyad. In contrast, its functionally important site is composed of a number of basic residues. The protein is Potassium channel toxin kappa-KTx 5.1 of Heterometrus laoticus (Thai giant scorpion).